Consider the following 193-residue polypeptide: Large ribosomal subunit protein bL12cy (193 aa).

The N-terminal 59 residues, 1–59 (MAATTLSIATTIRSSSFSSGLASAHHFPSRPLSIEFPFSFGVSSSSTLSHRAIYLHPIS), are a transit peptide targeting the chloroplast. Residues 170 to 187 (GVTKDEAEEDKTQLEEAG) are compositionally biased toward basic and acidic residues. A disordered region spans residues 170-193 (GVTKDEAEEDKTQLEEAGAKVSIV).

It belongs to the bacterial ribosomal protein bL12 family.

The protein resides in the plastid. Its subcellular location is the chloroplast. The sequence is that of Large ribosomal subunit protein bL12cy (RPL12B) from Arabidopsis thaliana (Mouse-ear cress).